The following is a 449-amino-acid chain: Phosphomannomutase (449 aa).

Serine 97 acts as the Phosphoserine intermediate in catalysis. Positions 97, 237, 239, and 241 each coordinate Mg(2+).

The protein belongs to the phosphohexose mutase family. Mg(2+) serves as cofactor.

The catalysed reaction is alpha-D-mannose 1-phosphate = D-mannose 6-phosphate. The protein operates within amino-acid biosynthesis. In terms of biological role, catalyzes the formation of mannose-1-P from mannose-6-P. Can also use glucose-6-P. The protein is Phosphomannomutase (manB) of Methanocaldococcus jannaschii (strain ATCC 43067 / DSM 2661 / JAL-1 / JCM 10045 / NBRC 100440) (Methanococcus jannaschii).